The chain runs to 173 residues: Shikimate kinase 1 (173 aa).

An ATP-binding site is contributed by 14 to 19 (GAGKST). A Mg(2+)-binding site is contributed by Ser18. Positions 36, 60, and 82 each coordinate substrate. Arg120 serves as a coordination point for ATP. Residue Arg140 participates in substrate binding. Gln157 is an ATP binding site.

Belongs to the shikimate kinase family. Monomer. Mg(2+) serves as cofactor.

The protein localises to the cytoplasm. It carries out the reaction shikimate + ATP = 3-phosphoshikimate + ADP + H(+). Its pathway is metabolic intermediate biosynthesis; chorismate biosynthesis; chorismate from D-erythrose 4-phosphate and phosphoenolpyruvate: step 5/7. Functionally, catalyzes the specific phosphorylation of the 3-hydroxyl group of shikimic acid using ATP as a cosubstrate. This is Shikimate kinase 1 from Serratia proteamaculans (strain 568).